The primary structure comprises 293 residues: Proline iminopeptidase (293 aa).

The 250-residue stretch at P28 to K277 folds into the AB hydrolase-1 domain. The active-site Nucleophile is the S105. The active site involves D244. H271 acts as the Proton donor in catalysis.

The protein belongs to the peptidase S33 family.

It is found in the cell envelope. The catalysed reaction is Release of N-terminal proline from a peptide.. Its function is as follows. Releases the N-terminal proline from various substrates. The polypeptide is Proline iminopeptidase (Lactobacillus acidophilus (strain ATCC 700396 / NCK56 / N2 / NCFM)).